The sequence spans 183 residues: Ion-translocating oxidoreductase complex subunit B (183 aa).

Positions 1–23 (MLSALLVMAAIAVVLGAALGFAA) are hydrophobic. The region spanning 29 to 88 (EGDPLVDKIDAILPQTQCGQCGYPGCKPYAQAIAQGEADINQCPPGGEEGVRKLADLLGR) is the 4Fe-4S domain. [4Fe-4S] cluster is bound by residues cysteine 46, cysteine 49, cysteine 54, cysteine 71, cysteine 113, cysteine 116, cysteine 119, cysteine 123, cysteine 143, cysteine 146, cysteine 149, and cysteine 153. 4Fe-4S ferredoxin-type domains follow at residues 104–133 (AVAY…GAAK) and 135–163 (MHTV…MEPV).

Belongs to the 4Fe4S bacterial-type ferredoxin family. RnfB subfamily. The complex is composed of six subunits: RnfA, RnfB, RnfC, RnfD, RnfE and RnfG. The cofactor is [4Fe-4S] cluster.

It localises to the cell inner membrane. Functionally, part of a membrane-bound complex that couples electron transfer with translocation of ions across the membrane. This is Ion-translocating oxidoreductase complex subunit B from Azoarcus sp. (strain BH72).